The sequence spans 234 residues: 2,3-bisphosphoglycerate-dependent phosphoglycerate mutase (234 aa).

Substrate-binding positions include 10–17 (RHGSSIWN), 23–24 (TG), R62, 89–92 (ERHY), K100, 116–117 (RR), and 186–187 (GN). H11 (tele-phosphohistidine intermediate) is an active-site residue. Residue E89 is the Proton donor/acceptor of the active site.

Belongs to the phosphoglycerate mutase family. BPG-dependent PGAM subfamily. In terms of assembly, homodimer.

The enzyme catalyses (2R)-2-phosphoglycerate = (2R)-3-phosphoglycerate. Its pathway is carbohydrate degradation; glycolysis; pyruvate from D-glyceraldehyde 3-phosphate: step 3/5. Its function is as follows. Catalyzes the interconversion of 2-phosphoglycerate and 3-phosphoglycerate. The polypeptide is 2,3-bisphosphoglycerate-dependent phosphoglycerate mutase (Wigglesworthia glossinidia brevipalpis).